The sequence spans 469 residues: Citrate synthase, mitochondrial (469 aa).

Residues 1–30 (MSFLSVSRLAPKLLNSKNATYFLVAARNAS) constitute a mitochondrion transit peptide. Active-site residues include His304 and His350. Residue Arg359 coordinates oxaloacetate. Asp405 is an active-site residue. The oxaloacetate site is built by Arg431 and Arg451.

This sequence belongs to the citrate synthase family. In terms of assembly, homodimer.

It localises to the mitochondrion matrix. The catalysed reaction is oxaloacetate + acetyl-CoA + H2O = citrate + CoA + H(+). It participates in carbohydrate metabolism; tricarboxylic acid cycle; isocitrate from oxaloacetate: step 1/2. Functionally, key enzyme of the Krebs tricarboxylic acid cycle which catalyzes the synthesis of citrate from acetyl coenzyme A and oxaloacetate. The protein is Citrate synthase, mitochondrial (cs) of Thunnus albacares (Yellowfin tuna).